The primary structure comprises 348 residues: GMP reductase 2 (348 aa).

NADP(+) contacts are provided by residues 26–27 (SR), K78, 129–131 (DVA), and 180–181 (IG). G181, G183, and C186 together coordinate K(+). C186 functions as the Thioimidate intermediate in the catalytic mechanism. T188 serves as the catalytic Proton donor/acceptor. R189 lines the K(+) pocket. GMP-binding positions include 219–221 (DGG), 242–243 (GG), 268–270 (GMS), and 286–290 (RASEG). NADP(+)-binding positions include M269 and 285–286 (YR). K291 carries the post-translational modification N6-acetyllysine. 314-317 (STCT) is a binding site for NADP(+).

It belongs to the IMPDH/GMPR family. GuaC type 1 subfamily. In terms of assembly, homotetramer. In terms of tissue distribution, highly expressed in heart, skeletal muscle, kidney, brain, liver, prostate, spleen, placenta, testis and ovary. Low expression in colon, thymus and peripheral blood leukocytes.

It carries out the reaction IMP + NH4(+) + NADP(+) = GMP + NADPH + 2 H(+). Functionally, catalyzes the irreversible NADPH-dependent deamination of GMP to IMP. It functions in the conversion of nucleobase, nucleoside and nucleotide derivatives of G to A nucleotides, and in maintaining the intracellular balance of A and G nucleotides. Plays a role in modulating cellular differentiation. In Homo sapiens (Human), this protein is GMP reductase 2.